The chain runs to 299 residues: MLSAGLGLLMLVAVIEFLIGLIGNGILVVWSLREWIRKFSWSSYNLIILGLAGCRFLLQWLIILDLSLFPLFQSSSWLRYLNVFWVLVSQASLWFATFLSVFYCKKITTFDRPAYLWLKQRAYNLSLWCLLGYFIISLLLTVQVGLTVHHPPQGNSSIRYPFEHWQYLYVFQLNSGSYLPLMVFLVSSGMLIISLYTHHKKMKVHSAGRRDARAKAHITALKSLGCFLLLHLVYIVASPFSITSKTYPPDLTSVFIWETLMAAYPSLHSLMLIMGIPRVKQTCQKILWKTVCARRCWGP.

Position 1 (methionine 1) is a topological domain, extracellular. The chain crosses the membrane as a helical span at residues 2 to 22 (LSAGLGLLMLVAVIEFLIGLI). At 23 to 45 (GNGILVVWSLREWIRKFSWSSYN) the chain is on the cytoplasmic side. Residues 46–66 (LIILGLAGCRFLLQWLIILDL) traverse the membrane as a helical segment. Residues 67–82 (SLFPLFQSSSWLRYLN) lie on the Extracellular side of the membrane. The chain crosses the membrane as a helical span at residues 83–103 (VFWVLVSQASLWFATFLSVFY). The Cytoplasmic portion of the chain corresponds to 104 to 127 (CKKITTFDRPAYLWLKQRAYNLSL). A helical transmembrane segment spans residues 128–148 (WCLLGYFIISLLLTVQVGLTV). Over 149–175 (HHPPQGNSSIRYPFEHWQYLYVFQLNS) the chain is Extracellular. N-linked (GlcNAc...) asparagine glycosylation occurs at asparagine 155. A helical membrane pass occupies residues 176–196 (GSYLPLMVFLVSSGMLIISLY). The Cytoplasmic segment spans residues 197 to 223 (THHKKMKVHSAGRRDARAKAHITALKS). Residues 224 to 244 (LGCFLLLHLVYIVASPFSITS) form a helical membrane-spanning segment. Over 245–253 (KTYPPDLTS) the chain is Extracellular. Residues 254 to 274 (VFIWETLMAAYPSLHSLMLIM) form a helical membrane-spanning segment. The Cytoplasmic segment spans residues 275–299 (GIPRVKQTCQKILWKTVCARRCWGP).

The protein belongs to the G-protein coupled receptor T2R family.

The protein localises to the membrane. In terms of biological role, receptor that may play a role in the perception of bitterness and is gustducin-linked. May play a role in sensing the chemical composition of the gastrointestinal content. The activity of this receptor may stimulate alpha gustducin, mediate PLC-beta-2 activation and lead to the gating of TRPM5. The protein is Taste receptor type 2 member 5 (TAS2R5) of Papio hamadryas (Hamadryas baboon).